Here is a 377-residue protein sequence, read N- to C-terminus: RING finger protein 215 (377 aa).

The Cytoplasmic portion of the chain corresponds to Met-1 to Pro-22. The segment at Met-1 to Pro-22 is disordered. Residues Arg-10–Pro-22 are compositionally biased toward pro residues. Residues Leu-23–Ala-43 traverse the membrane as a helical segment. The Extracellular segment spans residues Asp-44 to Pro-250. An N-linked (GlcNAc...) asparagine glycan is attached at Asn-186. The helical transmembrane segment at Leu-251–Val-271 threads the bilayer. Residues Gln-272–Asp-377 lie on the Cytoplasmic side of the membrane. The segment at Cys-325 to Lys-366 adopts an RING-type; atypical zinc-finger fold.

The protein resides in the membrane. The protein is RING finger protein 215 (RNF215) of Homo sapiens (Human).